The sequence spans 147 residues: Large ribosomal subunit protein uL15 (147 aa).

Residues 1–13 (MKLENLKSKEGSR) show a composition bias toward basic and acidic residues. The segment at 1 to 54 (MKLENLKSKEGSRHKTKRVGRGFGSGIGKTSTRGSKGQKSRKSGHTRPGFEGGQ) is disordered. The segment covering 36 to 45 (KGQKSRKSGH) has biased composition (basic residues).

The protein belongs to the universal ribosomal protein uL15 family. In terms of assembly, part of the 50S ribosomal subunit.

Binds to the 23S rRNA. The protein is Large ribosomal subunit protein uL15 of Malacoplasma penetrans (strain HF-2) (Mycoplasma penetrans).